A 228-amino-acid chain; its full sequence is Cytochrome b5 domain-containing protein 1 (228 aa).

Residues 17-83 (RRYFTPAEVA…DPKTRDIRKH (67 aa)) enclose the Cytochrome b5 heme-binding domain. Heme contacts are provided by Tyr-52 and His-83.

Belongs to the cytochrome b5 family.

The protein resides in the cytoplasm. Its subcellular location is the cytoskeleton. The protein localises to the cilium axoneme. Radial spoke stalk protein that binds heme under oxidizing conditions. Required for the coordinated beating of multiple cilia maybe by functioning in a redox signaling pathway. The chain is Cytochrome b5 domain-containing protein 1 from Homo sapiens (Human).